The primary structure comprises 510 residues: ATP synthase subunit alpha (510 aa).

169 to 176 (GDRQTGKT) is a binding site for ATP.

The protein belongs to the ATPase alpha/beta chains family. In terms of assembly, F-type ATPases have 2 components, CF(1) - the catalytic core - and CF(0) - the membrane proton channel. CF(1) has five subunits: alpha(3), beta(3), gamma(1), delta(1), epsilon(1). CF(0) has three main subunits: a(1), b(2) and c(9-12). The alpha and beta chains form an alternating ring which encloses part of the gamma chain. CF(1) is attached to CF(0) by a central stalk formed by the gamma and epsilon chains, while a peripheral stalk is formed by the delta and b chains.

The protein resides in the cell inner membrane. The enzyme catalyses ATP + H2O + 4 H(+)(in) = ADP + phosphate + 5 H(+)(out). Produces ATP from ADP in the presence of a proton gradient across the membrane. The alpha chain is a regulatory subunit. The protein is ATP synthase subunit alpha of Afipia carboxidovorans (strain ATCC 49405 / DSM 1227 / KCTC 32145 / OM5) (Oligotropha carboxidovorans).